Consider the following 85-residue polypeptide: Small ribosomal subunit protein uS17 (85 aa).

It belongs to the universal ribosomal protein uS17 family. As to quaternary structure, part of the 30S ribosomal subunit.

In terms of biological role, one of the primary rRNA binding proteins, it binds specifically to the 5'-end of 16S ribosomal RNA. The chain is Small ribosomal subunit protein uS17 from Mycoplasma pneumoniae (strain ATCC 29342 / M129 / Subtype 1) (Mycoplasmoides pneumoniae).